A 728-amino-acid polypeptide reads, in one-letter code: Catalase-peroxidase (728 aa).

Positions 91–218 (WHSAGTYRTA…LAAVQMGLIY (128 aa)) form a cross-link, tryptophyl-tyrosyl-methioninium (Trp-Tyr) (with M-244). The Proton acceptor role is filled by histidine 92. The segment at residues 218 to 244 (YVNPEGPDGNPDPVAAARDIRDTFARM) is a cross-link (tryptophyl-tyrosyl-methioninium (Tyr-Met) (with W-91)). Residue histidine 259 coordinates heme b.

The protein belongs to the peroxidase family. Peroxidase/catalase subfamily. As to quaternary structure, homodimer or homotetramer. It depends on heme b as a cofactor. Post-translationally, formation of the three residue Trp-Tyr-Met cross-link is important for the catalase, but not the peroxidase activity of the enzyme.

The enzyme catalyses H2O2 + AH2 = A + 2 H2O. The catalysed reaction is 2 H2O2 = O2 + 2 H2O. Functionally, bifunctional enzyme with both catalase and broad-spectrum peroxidase activity. The protein is Catalase-peroxidase of Burkholderia pseudomallei (strain 1710b).